Here is a 206-residue protein sequence, read N- to C-terminus: MELKLLNENGQEGAVVNASDVVFGRDYNEALIHQVVVAYQANARQGNRAQKDREQVKHTTKKPWRQKGTGRARAGMSSSPLWRGGGRIFPNSPEENFSHKVNKKMHRAGLCSIFSQLAREGRLSVVEDIILEAPKTKLLAEKFKTMGLDSVLIITDTVDENLYLASRNLPHVAIVEPRYADPLSLIYFKKVLVTKAAVAQIEELLS.

The interval 46–78 is disordered; it reads GNRAQKDREQVKHTTKKPWRQKGTGRARAGMSS. The span at 58 to 70 shows a compositional bias: basic residues; it reads HTTKKPWRQKGTG.

Belongs to the universal ribosomal protein uL4 family. Part of the 50S ribosomal subunit.

Its function is as follows. One of the primary rRNA binding proteins, this protein initially binds near the 5'-end of the 23S rRNA. It is important during the early stages of 50S assembly. It makes multiple contacts with different domains of the 23S rRNA in the assembled 50S subunit and ribosome. Forms part of the polypeptide exit tunnel. This Burkholderia lata (strain ATCC 17760 / DSM 23089 / LMG 22485 / NCIMB 9086 / R18194 / 383) protein is Large ribosomal subunit protein uL4.